Consider the following 350-residue polypeptide: Protein RecA (350 aa).

67 to 74 (GPESSGKT) lines the ATP pocket.

It belongs to the RecA family.

The protein localises to the cytoplasm. Can catalyze the hydrolysis of ATP in the presence of single-stranded DNA, the ATP-dependent uptake of single-stranded DNA by duplex DNA, and the ATP-dependent hybridization of homologous single-stranded DNAs. It interacts with LexA causing its activation and leading to its autocatalytic cleavage. The protein is Protein RecA of Mycobacterium avium (strain 104).